Consider the following 261-residue polypeptide: Kallikrein 1-related peptidase b5 (261 aa).

A signal peptide spans Met-1 to Ala-18. Positions Pro-19–Arg-24 are cleaved as a propeptide — activation peptide. A Peptidase S1 domain is found at Ile-25–Ala-258. Intrachain disulfides connect Cys-31/Cys-173, Cys-50/Cys-66, Cys-152/Cys-219, Cys-184/Cys-198, and Cys-209/Cys-234. His-65 acts as the Charge relay system in catalysis. A glycan (N-linked (GlcNAc...) asparagine) is linked at Asn-102. Asp-120 functions as the Charge relay system in the catalytic mechanism. Ser-213 functions as the Charge relay system in the catalytic mechanism.

The protein belongs to the peptidase S1 family. Kallikrein subfamily.

The enzyme catalyses Preferential cleavage of Arg-|-Xaa bonds in small molecule substrates. Highly selective action to release kallidin (lysyl-bradykinin) from kininogen involves hydrolysis of Met-|-Xaa or Leu-|-Xaa.. Functionally, glandular kallikreins cleave Met-Lys and Arg-Ser bonds in kininogen to release Lys-bradykinin. The chain is Kallikrein 1-related peptidase b5 (Klk1b5) from Mus musculus (Mouse).